The following is a 120-amino-acid chain: Large ribosomal subunit protein uL22 (120 aa).

This sequence belongs to the universal ribosomal protein uL22 family. Part of the 50S ribosomal subunit.

Its function is as follows. This protein binds specifically to 23S rRNA; its binding is stimulated by other ribosomal proteins, e.g. L4, L17, and L20. It is important during the early stages of 50S assembly. It makes multiple contacts with different domains of the 23S rRNA in the assembled 50S subunit and ribosome. In terms of biological role, the globular domain of the protein is located near the polypeptide exit tunnel on the outside of the subunit, while an extended beta-hairpin is found that lines the wall of the exit tunnel in the center of the 70S ribosome. This chain is Large ribosomal subunit protein uL22, found in Corynebacterium glutamicum (strain R).